The chain runs to 622 residues: Low affinity potassium transport system protein Kup (622 aa).

12 consecutive transmembrane segments (helical) span residues 9–29 (LPAV…TSPL), 52–72 (FLSL…LLFV), 99–119 (TPVL…EVVI), 137–157 (PSLQ…LFFI), 165–185 (VGKL…VLGV), 213–233 (VSFF…ALYA), 247–267 (WFSA…ALLL), 276–296 (PFFL…ATLA), 337–357 (IYIP…IVSF), 363–383 (LAAA…ILSC), 394–414 (LLIV…MFAA), and 419–439 (IFSG…AMIT).

The protein belongs to the HAK/KUP transporter (TC 2.A.72) family.

The protein localises to the cell inner membrane. The enzyme catalyses K(+)(in) + H(+)(in) = K(+)(out) + H(+)(out). In terms of biological role, responsible for the low-affinity transport of potassium into the cell. Likely operates as a K(+):H(+) symporter. This is Low affinity potassium transport system protein Kup from Sodalis glossinidius (strain morsitans).